A 160-amino-acid polypeptide reads, in one-letter code: Secreted RxLR effector protein 83 (160 aa).

Residues 1–21 (MLVLLAATFFIYISRLTSTDA) form the signal peptide. The RxLR signature appears at 27–30 (RGLR). N-linked (GlcNAc...) asparagine glycans are attached at residues N39 and N131.

This sequence belongs to the RxLR effector family.

It is found in the secreted. The protein localises to the host nucleus. It localises to the host cytoplasm. Secreted effector that completely suppresses the host cell death induced by cell death-inducing proteins. This chain is Secreted RxLR effector protein 83, found in Plasmopara viticola (Downy mildew of grapevine).